Here is a 629-residue protein sequence, read N- to C-terminus: Phosphomethylpyrimidine synthase (629 aa).

The tract at residues 1–24 (MSTKPKNAAHLSESAQVDSGSVQP) is disordered. The span at 13–24 (ESAQVDSGSVQP) shows a compositional bias: polar residues. Residues N233, M262, Y291, H327, 347–349 (SRG), 388–391 (DGLR), and E427 contribute to the substrate site. H431 serves as a coordination point for Zn(2+). Residue Y454 participates in substrate binding. H495 is a Zn(2+) binding site. The [4Fe-4S] cluster site is built by C575, C578, and C583.

Belongs to the ThiC family. As to quaternary structure, homodimer. Requires [4Fe-4S] cluster as cofactor.

It carries out the reaction 5-amino-1-(5-phospho-beta-D-ribosyl)imidazole + S-adenosyl-L-methionine = 4-amino-2-methyl-5-(phosphooxymethyl)pyrimidine + CO + 5'-deoxyadenosine + formate + L-methionine + 3 H(+). Its pathway is cofactor biosynthesis; thiamine diphosphate biosynthesis. Catalyzes the synthesis of the hydroxymethylpyrimidine phosphate (HMP-P) moiety of thiamine from aminoimidazole ribotide (AIR) in a radical S-adenosyl-L-methionine (SAM)-dependent reaction. The sequence is that of Phosphomethylpyrimidine synthase from Pseudomonas syringae pv. tomato (strain ATCC BAA-871 / DC3000).